Here is a 184-residue protein sequence, read N- to C-terminus: Glutathione-regulated potassium-efflux system ancillary protein KefG (184 aa).

The protein belongs to the NAD(P)H dehydrogenase (quinone) family. KefG subfamily. Interacts with KefB.

The protein localises to the cell inner membrane. The catalysed reaction is a quinone + NADH + H(+) = a quinol + NAD(+). It carries out the reaction a quinone + NADPH + H(+) = a quinol + NADP(+). Its function is as follows. Regulatory subunit of a potassium efflux system that confers protection against electrophiles. Required for full activity of KefB. The protein is Glutathione-regulated potassium-efflux system ancillary protein KefG of Cronobacter sakazakii (strain ATCC BAA-894) (Enterobacter sakazakii).